We begin with the raw amino-acid sequence, 289 residues long: Putative transmembrane protein ORF111 (289 aa).

The next 5 membrane-spanning stretches (helical) occupy residues 1-21, 112-132, 151-171, 189-209, and 261-281; these read MIGPIVVLHLICAVGFSIFML, AIITIAIVGVVIGVFIIVCIA, IGITLFLLFLTLAGSVAFIVI, LNISWGFVCGILAISYSTSIL, and YLLTLCLLWWPAITIYFIGVG.

The protein localises to the host membrane. The chain is Putative transmembrane protein ORF111 from Ostreid herpesvirus 1 (isolate France) (OsHV-1).